Here is a 486-residue protein sequence, read N- to C-terminus: MKFIVKLYPEIMMKSKSVRSRFTKMLETNIRNVLKKVDEDAKVQRQWDRIMVRVPADRPELVDAFAERLGCIPGIAHVVQVNEYTFDSVDHIYQQVLPLYREQLAGKTFCVRVKRTGQHDFKSIEVERYVGGGLNQHTDAVGVKLKNPDLTINLEIDHEKLYMVVRRIEGLGGFPMATQEDVLSLISGGFDSGVSSFQFIKKGARTHYCFFNLGGSQHEIGVKQVAYHLWKTYGESHKVKFISVPFEGVVQEILERIDNGQMGVILKRVMMRAATLLADKYGIQALVTGESLGQVSSQTLTNLNVIDRCTDLLILRPLIAMDKQDIINQSRIIGTEDFAKSIPEYCGVISQKPTVKAVLSKIEAEELKFSENLIENIVAQAKVIDIKDIAIEMDNQIAAAEAETVVAVDTQEVVIDIRAQEEEEKNPLSLPGKTVMTIPFFKLSTQFADLDKSVTYLLYCERGVMSKLQALYLIEQGYTNVKVYRP.

The region spanning 63-167 (DAFAERLGCI…HEKLYMVVRR (105 aa)) is the THUMP domain. ATP-binding positions include 185 to 186 (LI), K267, G289, and Q298. Cysteines 346 and 460 form a disulfide. In terms of domain architecture, Rhodanese spans 408–486 (VDTQEVVIDI…GYTNVKVYRP (79 aa)). C460 acts as the Cysteine persulfide intermediate in catalysis.

It belongs to the ThiI family.

The protein resides in the cytoplasm. The enzyme catalyses [ThiI sulfur-carrier protein]-S-sulfanyl-L-cysteine + a uridine in tRNA + 2 reduced [2Fe-2S]-[ferredoxin] + ATP + H(+) = [ThiI sulfur-carrier protein]-L-cysteine + a 4-thiouridine in tRNA + 2 oxidized [2Fe-2S]-[ferredoxin] + AMP + diphosphate. The catalysed reaction is [ThiS sulfur-carrier protein]-C-terminal Gly-Gly-AMP + S-sulfanyl-L-cysteinyl-[cysteine desulfurase] + AH2 = [ThiS sulfur-carrier protein]-C-terminal-Gly-aminoethanethioate + L-cysteinyl-[cysteine desulfurase] + A + AMP + 2 H(+). It functions in the pathway cofactor biosynthesis; thiamine diphosphate biosynthesis. Its function is as follows. Catalyzes the ATP-dependent transfer of a sulfur to tRNA to produce 4-thiouridine in position 8 of tRNAs, which functions as a near-UV photosensor. Also catalyzes the transfer of sulfur to the sulfur carrier protein ThiS, forming ThiS-thiocarboxylate. This is a step in the synthesis of thiazole, in the thiamine biosynthesis pathway. The sulfur is donated as persulfide by IscS. The polypeptide is tRNA sulfurtransferase (Shewanella denitrificans (strain OS217 / ATCC BAA-1090 / DSM 15013)).